A 226-amino-acid polypeptide reads, in one-letter code: Exopolysaccharide production protein ExoY (226 aa).

A helical transmembrane segment spans residues 34 to 54 (VLAASVALLLFSPLFLLIMAL).

Belongs to the bacterial sugar transferase family.

Its subcellular location is the cell membrane. It functions in the pathway glycan metabolism; exopolysaccharide biosynthesis. In terms of biological role, needed for the addition of the first sugar (galactose) to the isoprenoid carrier. May function as a sugar transferase. This Rhizobium meliloti (strain 1021) (Ensifer meliloti) protein is Exopolysaccharide production protein ExoY (exoY).